Here is a 581-residue protein sequence, read N- to C-terminus: Chaotic nuclear migration protein 67 (581 aa).

5 positions are modified to phosphoserine: serine 17, serine 20, serine 72, serine 85, and serine 89. The tract at residues 86-150 is disordered; sequence YQESPGLQER…PTDEHTSPDI (65 aa). The segment covering 94–114 has biased composition (basic and acidic residues); it reads ERPKNEKDKSPIGTDVHKKDV. Serine 151 is modified (phosphoserine). Coiled coils occupy residues 179 to 252, 306 to 363, and 373 to 451; these read LGYQ…DTIQ, FLCA…LSKQ, and KLTI…NTSE.

Interacts directly with ADY3 and YOR129C. Interacts with ADY4. Probable component of a SPB complex composed of ADY3, SSP1, DON1, MPC54, SPO21/MPC70, NUD1 and CNM67. Phosphorylated in its N-terminal part.

It is found in the cytoplasm. It localises to the cytoskeleton. Its subcellular location is the microtubule organizing center. The protein resides in the spindle pole body. Involved in the pathway that organizes the shaping and sizing of the prospore membrane (PSM) during sporulation. Required for the proper formation of the spindle pole body (SPB) outer plaque. May connect the outer plaque to the central plaque embedded in the nuclear envelope. The protein is Chaotic nuclear migration protein 67 (CNM67) of Saccharomyces cerevisiae (strain ATCC 204508 / S288c) (Baker's yeast).